A 226-amino-acid chain; its full sequence is PKHD-type hydroxylase Daci_1172 (226 aa).

The Fe2OG dioxygenase domain maps to 78 to 178; it reads KVLPPRFNRY…RYASFFWTHS (101 aa). Fe cation-binding residues include histidine 96, aspartate 98, and histidine 159. Arginine 169 is a 2-oxoglutarate binding site.

Fe(2+) is required as a cofactor. It depends on L-ascorbate as a cofactor.

The chain is PKHD-type hydroxylase Daci_1172 from Delftia acidovorans (strain DSM 14801 / SPH-1).